The following is a 219-amino-acid chain: Ribose-5-phosphate isomerase A (219 aa).

Residues 28–31 (TGST), 81–84 (DSAD), and 94–97 (KGGG) each bind substrate. Glu103 serves as the catalytic Proton acceptor. Position 121 (Lys121) interacts with substrate.

It belongs to the ribose 5-phosphate isomerase family. In terms of assembly, homodimer.

The catalysed reaction is aldehydo-D-ribose 5-phosphate = D-ribulose 5-phosphate. The protein operates within carbohydrate degradation; pentose phosphate pathway; D-ribose 5-phosphate from D-ribulose 5-phosphate (non-oxidative stage): step 1/1. Its function is as follows. Catalyzes the reversible conversion of ribose-5-phosphate to ribulose 5-phosphate. This is Ribose-5-phosphate isomerase A from Buchnera aphidicola subsp. Schizaphis graminum (strain Sg).